We begin with the raw amino-acid sequence, 348 residues long: Lipoyl synthase (348 aa).

[4Fe-4S] cluster contacts are provided by Cys55, Cys60, Cys66, Cys81, Cys85, Cys88, and Ser292. A Radical SAM core domain is found at 67-281 (WESREATFLI…ADAAKEMGFA (215 aa)).

It belongs to the radical SAM superfamily. Lipoyl synthase family. Requires [4Fe-4S] cluster as cofactor.

Its subcellular location is the cytoplasm. The enzyme catalyses [[Fe-S] cluster scaffold protein carrying a second [4Fe-4S](2+) cluster] + N(6)-octanoyl-L-lysyl-[protein] + 2 oxidized [2Fe-2S]-[ferredoxin] + 2 S-adenosyl-L-methionine + 4 H(+) = [[Fe-S] cluster scaffold protein] + N(6)-[(R)-dihydrolipoyl]-L-lysyl-[protein] + 4 Fe(3+) + 2 hydrogen sulfide + 2 5'-deoxyadenosine + 2 L-methionine + 2 reduced [2Fe-2S]-[ferredoxin]. The protein operates within protein modification; protein lipoylation via endogenous pathway; protein N(6)-(lipoyl)lysine from octanoyl-[acyl-carrier-protein]: step 2/2. In terms of biological role, catalyzes the radical-mediated insertion of two sulfur atoms into the C-6 and C-8 positions of the octanoyl moiety bound to the lipoyl domains of lipoate-dependent enzymes, thereby converting the octanoylated domains into lipoylated derivatives. This Corynebacterium glutamicum (strain R) protein is Lipoyl synthase.